We begin with the raw amino-acid sequence, 601 residues long: Glutathione-regulated potassium-efflux system protein KefB (601 aa).

Transmembrane regions (helical) follow at residues Ser5–Ala25, Ile29–Phe49, Glu55–Leu75, Ile87–Trp107, Ala115–Met135, Val152–Gly172, Trp180–Arg202, Phe207–Gly227, Leu230–Leu250, Gly268–Tyr288, Ile291–Leu311, Leu324–Ala344, and Pro356–Val376. The RCK N-terminal domain maps to Lys400–Thr519.

The protein belongs to the monovalent cation:proton antiporter 2 (CPA2) transporter (TC 2.A.37) family. KefB subfamily. Interacts with the regulatory subunit KefG.

The protein resides in the cell inner membrane. Its function is as follows. Pore-forming subunit of a potassium efflux system that confers protection against electrophiles. Catalyzes K(+)/H(+) antiport. The sequence is that of Glutathione-regulated potassium-efflux system protein KefB from Erwinia tasmaniensis (strain DSM 17950 / CFBP 7177 / CIP 109463 / NCPPB 4357 / Et1/99).